A 202-amino-acid chain; its full sequence is dITP/XTP pyrophosphatase (202 aa).

7-12 (SNNPGK) provides a ligand contact to substrate. 2 residues coordinate Mg(2+): Glu-39 and Asp-68. Asp-68 serves as the catalytic Proton acceptor. Residues Ala-69, 157-160 (FGFD), Lys-180, and 185-186 (HR) contribute to the substrate site.

The protein belongs to the HAM1 NTPase family. As to quaternary structure, homodimer. The cofactor is Mg(2+).

It catalyses the reaction XTP + H2O = XMP + diphosphate + H(+). It carries out the reaction dITP + H2O = dIMP + diphosphate + H(+). The catalysed reaction is ITP + H2O = IMP + diphosphate + H(+). Functionally, pyrophosphatase that catalyzes the hydrolysis of nucleoside triphosphates to their monophosphate derivatives, with a high preference for the non-canonical purine nucleotides XTP (xanthosine triphosphate), dITP (deoxyinosine triphosphate) and ITP. Seems to function as a house-cleaning enzyme that removes non-canonical purine nucleotides from the nucleotide pool, thus preventing their incorporation into DNA/RNA and avoiding chromosomal lesions. This chain is dITP/XTP pyrophosphatase, found in Polaromonas naphthalenivorans (strain CJ2).